A 392-amino-acid chain; its full sequence is MASVEEIRNAQRAKGPATILAIGTATPDHCVYQSDYADYYFRVTKSEHMTELKKKFNRICDKSMIKKRYIHLTEEMLEEHPNIGAYMAPSLNIRQEIITVEVPKLGKEAALKALKEWGQPKSKITHLVFCTTSGVEMPGADYKLANLLGLETSVRRVMLYHQGCYAGGTVLRTAKDLAENNAGARVLVVCSEITVVTFRGPSEDALDSLVGQALFGDGSAAVIVGSDPDVSIERPLFQLVSAAQTFIPNSAGAIAGNLREVGLTFHLWPNVPTLISENVEKCLTQAFDPLGISDWNSLFWIAHPGGPAILDAVEAKLNLDKKKLEATRHVLSEYGNMSSACVLFILDEMRKKSHKGEKATTGEGLDWGVLFGFGPGLTIETVVLHSIPMVTN.

Residue K55–R58 participates in substrate binding. C164 is a catalytic residue. Substrate is bound by residues L267 and G305–P307.

The protein belongs to the thiolase-like superfamily. Chalcone/stilbene synthases family. As to quaternary structure, homodimer.

The protein localises to the cytoplasm. The enzyme catalyses 4-coumaroyl-CoA + 3 malonyl-CoA + 3 H(+) = trans-resveratrol + 4 CO2 + 4 CoA. It functions in the pathway phytoalexin biosynthesis; 3,4',5-trihydroxystilbene biosynthesis; 3,4',5-trihydroxystilbene from trans-4-coumarate: step 2/2. Its function is as follows. Mediates resistance to pathogens which are sensitive to stilbenes. The sequence is that of Stilbene synthase 3 from Vitis vinifera (Grape).